Here is a 705-residue protein sequence, read N- to C-terminus: MDFAPLDSLTEKAAKKELSKLADLLDQANTAYHANDAPIISDADFDAYKRRNLAIEERFPHLKRADSPTDRVGAAPSAGFSKVVHSIAMLSLANAFDEADVSDFVQRIRKHLGLSDIEALSFTSEPKIDGLSLSLRYENGTLVQAATRGDGAIGENVTENARTIPDIPEQISNAPDVLEVRGEVYMSHADFEALNARQASAGAKLFANPRNAAAGSLRQLDARITQSRPLRFFAYAWGTLSEPLGKTQMQSIERLQSFGFQTNDLTEKCNGPEELLAQYRRIEERRASLDYDIDGVVYKVDDLDLQRRLGFRSTTPRWAIAHKFPAELAWTELQGIDIQVGRTGALSPVARLKPVTVGGVVVSNATLHNEDYIAGRDNKGDVIRGGKDIRVGDFVQVYRAGDVIPKVADVDLKKRPADAIPYVFPATCPECGSDALREAGDAVRRCTGGLICPAQAVERLKHFVSRAAFDIDGLGAKQIEQFYKDGWISEPADIFTLRDRFGSGIQQLKNRDGWGEKSANNLFDAIDDKRQIPLARLIFALGIRHVGEAASNLIAQHYSTFDAFEKSMLAAQDKDGEAWDDLLSIDGVGTVMAQSVIHAMGQAAERASIDRLVAQLDVQPSEAVVTDGSPVAGKTVVFTGTLSKMTRAEAKSRAESLGARVAGSVSAKTDFLVAGPGAGSKAKKAAELGVQTLDEDGWLALIEGL.

Residues 42 to 46 (DADFD), 91 to 92 (SL), and Glu-125 each bind NAD(+). Catalysis depends on Lys-127, which acts as the N6-AMP-lysine intermediate. Residues Arg-148, Glu-183, Lys-299, and Lys-323 each contribute to the NAD(+) site. Residues Cys-428, Cys-431, Cys-446, and Cys-452 each contribute to the Zn(2+) site. The region spanning 626–705 (TDGSPVAGKT…DGWLALIEGL (80 aa)) is the BRCT domain.

It belongs to the NAD-dependent DNA ligase family. LigA subfamily. The cofactor is Mg(2+). Mn(2+) is required as a cofactor.

It carries out the reaction NAD(+) + (deoxyribonucleotide)n-3'-hydroxyl + 5'-phospho-(deoxyribonucleotide)m = (deoxyribonucleotide)n+m + AMP + beta-nicotinamide D-nucleotide.. DNA ligase that catalyzes the formation of phosphodiester linkages between 5'-phosphoryl and 3'-hydroxyl groups in double-stranded DNA using NAD as a coenzyme and as the energy source for the reaction. It is essential for DNA replication and repair of damaged DNA. This is DNA ligase from Roseobacter denitrificans (strain ATCC 33942 / OCh 114) (Erythrobacter sp. (strain OCh 114)).